We begin with the raw amino-acid sequence, 776 residues long: Endonuclease MutS2 (776 aa).

Position 328-335 (328-335) interacts with ATP; sequence GPNTGGKT. In terms of domain architecture, Smr spans 701–776; that stretch reads LDLRGKRYEE…GSGATIVTFK (76 aa).

Belongs to the DNA mismatch repair MutS family. MutS2 subfamily. Homodimer. Binds to stalled ribosomes, contacting rRNA.

Endonuclease that is involved in the suppression of homologous recombination and thus may have a key role in the control of bacterial genetic diversity. In terms of biological role, acts as a ribosome collision sensor, splitting the ribosome into its 2 subunits. Detects stalled/collided 70S ribosomes which it binds and splits by an ATP-hydrolysis driven conformational change. Acts upstream of the ribosome quality control system (RQC), a ribosome-associated complex that mediates the extraction of incompletely synthesized nascent chains from stalled ribosomes and their subsequent degradation. Probably generates substrates for RQC. This chain is Endonuclease MutS2, found in Streptococcus mutans serotype c (strain ATCC 700610 / UA159).